The chain runs to 239 residues: Norbelladine 4'-O-methyltransferase 5 (239 aa).

S-adenosyl-L-methionine is bound by residues V55, E77, 79–80 (GV), S85, D103, and A132. Position 155 (D155) interacts with a divalent metal cation. D157 contributes to the S-adenosyl-L-methionine binding site. Residues D181 and N182 each contribute to the a divalent metal cation site.

It belongs to the class I-like SAM-binding methyltransferase superfamily. Cation-dependent O-methyltransferase family. Mg(2+) serves as cofactor.

It catalyses the reaction norbelladine + S-adenosyl-L-methionine = 4'-O-methylnorbelladine + S-adenosyl-L-homocysteine + H(+). It functions in the pathway alkaloid biosynthesis. Its function is as follows. 4'-O-methyltransferase converting norbelladine to 4'-O-methylnorbelladine. 4'-O-methylnorbelladine is a precursor to all Amaryllidaceae alkaloids such as galanthamine, lycorine and haemanthamine, and including haemanthamine- and crinamine-type alkaloids, promising anticancer agents. The polypeptide is Norbelladine 4'-O-methyltransferase 5 (Narcissus aff. pseudonarcissus MK-2014 (Daffodil)).